The following is a 525-amino-acid chain: MKHLEQRIHALLNADAAATLAGIRRGIEKESLRITTDGTLAQTPHPRALGSALTHPYITTDYSEALLEFITPPSTELHKPIEFLEQLHRYVYSHIGDEVLWVNSMPCMIGKDSDVPVAQYGSSNVGRMKTVYREGLGHRYGRKMQTIAGIHYNFSYPDAFWKLNQQLEGDNAPLQDYISRRYFDLTRNFQRYSWLLVYLFGASPALCASFLAGREHDLLERFDHSLYRPQATSLRMSDLGYQNNAQSSLAISYNNLDEYVSTLTHAINTPEPAYEKMGVKVTDADGNVKYQQLNANILQIENEYYSSIRPKRTIKPGERPTTALQERGVEYIEIRALDLNPFEPVGINQQEIRFLDLFATYCLLRESPQLEKCDLHASKENLRKVVYDGRNTDIQLYNWGKSVSLKNWASEKLTQMQPIAELFDRAHGGNNYAEALAHQQEKVDNPSATPSAQILEQLESRNQGFFQFAMEQALAHRDHFLSGQRCDATNQQLEALAADSLAEQAAGEAADQQSFEEYLADYFHD.

The protein belongs to the glutamate--cysteine ligase type 1 family. Type 1 subfamily.

The enzyme catalyses L-cysteine + L-glutamate + ATP = gamma-L-glutamyl-L-cysteine + ADP + phosphate + H(+). It functions in the pathway sulfur metabolism; glutathione biosynthesis; glutathione from L-cysteine and L-glutamate: step 1/2. This chain is Glutamate--cysteine ligase, found in Alcanivorax borkumensis (strain ATCC 700651 / DSM 11573 / NCIMB 13689 / SK2).